A 642-amino-acid polypeptide reads, in one-letter code: Bifunctional protein glk (642 aa).

Residues 1–340 (MSTGAQSKAV…QLSNRSGGAS (340 aa)) form a glucokinase region. An ATP-binding site is contributed by 23 to 28 (ADVGGT). Residues 341 to 417 (SAVFERIRQM…LKLATGLTGT (77 aa)) form the HTH rpiR-type domain. Residues 341–642 (SAVFERIRQM…SPAAKDVARD (302 aa)) are putative HTH-type transcriptional regulator. A DNA-binding region (H-T-H motif) is located at residues 377–396 (IVDIARKADVSQPTVIRFCR). The region spanning 461–600 (AIEILNGARR…AVGVAIRRAS (140 aa)) is the SIS domain. A helical transmembrane segment spans residues 576–596 (SMISRILHLLMIDILAVGVAI).

The protein in the N-terminal section; belongs to the bacterial glucokinase family.

The protein localises to the membrane. The catalysed reaction is D-glucose + ATP = D-glucose 6-phosphate + ADP + H(+). The sequence is that of Bifunctional protein glk (glk) from Burkholderia orbicola (strain AU 1054).